Consider the following 418-residue polypeptide: Light-independent protochlorophyllide reductase subunit N (418 aa).

The [4Fe-4S] cluster site is built by C17, C42, and C103.

It belongs to the BchN/ChlN family. As to quaternary structure, protochlorophyllide reductase is composed of three subunits; ChlL, ChlN and ChlB. Forms a heterotetramer of two ChlB and two ChlN subunits. Requires [4Fe-4S] cluster as cofactor.

It carries out the reaction chlorophyllide a + oxidized 2[4Fe-4S]-[ferredoxin] + 2 ADP + 2 phosphate = protochlorophyllide a + reduced 2[4Fe-4S]-[ferredoxin] + 2 ATP + 2 H2O. It participates in porphyrin-containing compound metabolism; chlorophyll biosynthesis (light-independent). Functionally, component of the dark-operative protochlorophyllide reductase (DPOR) that uses Mg-ATP and reduced ferredoxin to reduce ring D of protochlorophyllide (Pchlide) to form chlorophyllide a (Chlide). This reaction is light-independent. The NB-protein (ChlN-ChlB) is the catalytic component of the complex. The polypeptide is Light-independent protochlorophyllide reductase subunit N (Prochlorococcus marinus (strain MIT 9211)).